Reading from the N-terminus, the 265-residue chain is Translation initiation factor 2 subunit alpha (265 aa).

The region spanning 12 to 82 (GELVIGTVKK…KMRVVEVSLK (71 aa)) is the S1 motif domain.

Belongs to the eIF-2-alpha family. Heterotrimer composed of an alpha, a beta and a gamma chain.

In terms of biological role, eIF-2 functions in the early steps of protein synthesis by forming a ternary complex with GTP and initiator tRNA. This chain is Translation initiation factor 2 subunit alpha, found in Pyrobaculum aerophilum (strain ATCC 51768 / DSM 7523 / JCM 9630 / CIP 104966 / NBRC 100827 / IM2).